The sequence spans 359 residues: Phospho-N-acetylmuramoyl-pentapeptide-transferase (359 aa).

10 helical membrane passes run glutamine 3 to isoleucine 23, valine 55 to leucine 75, glycine 84 to isoleucine 104, threonine 120 to alanine 140, isoleucine 156 to alanine 176, leucine 187 to phenylalanine 207, leucine 231 to alanine 251, isoleucine 255 to threonine 275, isoleucine 280 to isoleucine 300, and phenylalanine 334 to leucine 354.

Belongs to the glycosyltransferase 4 family. MraY subfamily. The cofactor is Mg(2+).

Its subcellular location is the cell membrane. It catalyses the reaction UDP-N-acetyl-alpha-D-muramoyl-L-alanyl-gamma-D-glutamyl-meso-2,6-diaminopimeloyl-D-alanyl-D-alanine + di-trans,octa-cis-undecaprenyl phosphate = di-trans,octa-cis-undecaprenyl diphospho-N-acetyl-alpha-D-muramoyl-L-alanyl-D-glutamyl-meso-2,6-diaminopimeloyl-D-alanyl-D-alanine + UMP. It functions in the pathway cell wall biogenesis; peptidoglycan biosynthesis. Its function is as follows. Catalyzes the initial step of the lipid cycle reactions in the biosynthesis of the cell wall peptidoglycan: transfers peptidoglycan precursor phospho-MurNAc-pentapeptide from UDP-MurNAc-pentapeptide onto the lipid carrier undecaprenyl phosphate, yielding undecaprenyl-pyrophosphoryl-MurNAc-pentapeptide, known as lipid I. This chain is Phospho-N-acetylmuramoyl-pentapeptide-transferase, found in Mycobacterium sp. (strain MCS).